Here is a 494-residue protein sequence, read N- to C-terminus: Ectonucleoside triphosphate diphosphohydrolase 8 (494 aa).

Residues Met-1–Arg-8 are Cytoplasmic-facing. A helical transmembrane segment spans residues Val-9–Leu-29. Residues Val-30 to Ser-465 lie on the Extracellular side of the membrane. A disulfide bond links Cys-78 and Cys-102. Glu-168 serves as the catalytic Proton acceptor. The cysteines at positions 245 and 291 are disulfide-linked. N-linked (GlcNAc...) asparagine glycans are attached at residues Asn-299 and Asn-303. A disulfide bridge connects residues Cys-328 and Cys-334. N-linked (GlcNAc...) asparagine glycosylation is present at Asn-362. A disulfide bond links Cys-380 and Cys-402. Residues Ile-466–Ala-486 form a helical membrane-spanning segment. Residues Val-487 to Asp-494 lie on the Cytoplasmic side of the membrane.

It belongs to the GDA1/CD39 NTPase family. Requires Ca(2+) as cofactor. Mg(2+) serves as cofactor. In terms of processing, N-glycosylated. As to expression, present in liver, and at lower level in jejunum and kidney. Limited to the canalicular domain of hepatocytes (at protein level).

It localises to the cell membrane. The catalysed reaction is a ribonucleoside 5'-triphosphate + 2 H2O = a ribonucleoside 5'-phosphate + 2 phosphate + 2 H(+). Functionally, canalicular ectonucleoside NTPDase responsible for the main hepatic NTPDase activity. Ectonucleoside NTPDases catalyze the hydrolysis of gamma- and beta-phosphate residues of nucleotides, playing a central role in concentration of extracellular nucleotides. Has activity toward ATP, ADP, UTP and UDP, but not toward AMP. The sequence is that of Ectonucleoside triphosphate diphosphohydrolase 8 (Entpd8) from Rattus norvegicus (Rat).